A 336-amino-acid polypeptide reads, in one-letter code: Calcium uniporter protein 3, mitochondrial (336 aa).

A mitochondrion-targeting transit peptide spans 1–69; that stretch reads MAMRKLLSKK…RFMHNSAMIR (69 aa). Helical transmembrane passes span 231–251 and 257–277; these read LWAG…LTFW and VMEP…YAFF. A Selectivity filter motif is present at residues 255 to 263; the sequence is WDVMEPICF. Residue glutamate 259 coordinates Ca(2+).

It belongs to the MCU (TC 1.A.77) family.

Its subcellular location is the mitochondrion inner membrane. It carries out the reaction Ca(2+)(in) = Ca(2+)(out). Mitochondrial inner membrane calcium uniporter that mediates calcium uptake into mitochondria. Constitutes a pore-forming and calcium-conducting subunit. Mitochondrial calcium homeostasis plays key roles in cellular physiology and regulates cell bioenergetics, cytoplasmic calcium signals and activation of cell death pathways. The sequence is that of Calcium uniporter protein 3, mitochondrial from Arabidopsis thaliana (Mouse-ear cress).